We begin with the raw amino-acid sequence, 40 residues long: Large ribosomal subunit protein bL36A (40 aa).

Belongs to the bacterial ribosomal protein bL36 family.

The sequence is that of Large ribosomal subunit protein bL36A from Renibacterium salmoninarum (strain ATCC 33209 / DSM 20767 / JCM 11484 / NBRC 15589 / NCIMB 2235).